The chain runs to 799 residues: DNA ligase (799 aa).

The segment covering 1-11 has biased composition (basic and acidic residues); that stretch reads MTEVKTGRVVD. Residues 1–35 are disordered; that stretch reads MTEVKTGRVVDDAPVNDAPENNAAEATSPARHDAI. NAD(+)-binding positions include 67–71, 116–117, and aspartate 147; these read DAEYD and SL. Lysine 149 serves as the catalytic N6-AMP-lysine intermediate. Residues arginine 170, glutamate 207, lysine 327, and lysine 351 each coordinate NAD(+). Zn(2+) is bound by residues cysteine 445, cysteine 448, cysteine 463, and cysteine 468. The BRCT domain occupies 634-723; that stretch reads AIVLPLQGLK…VASVDASEAV (90 aa). A disordered region spans residues 720–799; the sequence is SEAVAEETPP…RGRAEQLKLF (80 aa). Low complexity predominate over residues 755-767; it reads GSASGDDSRGAAA. A compositionally biased stretch (basic and acidic residues) spans 787–799; it reads DVPRGRAEQLKLF.

The protein belongs to the NAD-dependent DNA ligase family. LigA subfamily. Mg(2+) serves as cofactor. It depends on Mn(2+) as a cofactor.

It catalyses the reaction NAD(+) + (deoxyribonucleotide)n-3'-hydroxyl + 5'-phospho-(deoxyribonucleotide)m = (deoxyribonucleotide)n+m + AMP + beta-nicotinamide D-nucleotide.. Its function is as follows. DNA ligase that catalyzes the formation of phosphodiester linkages between 5'-phosphoryl and 3'-hydroxyl groups in double-stranded DNA using NAD as a coenzyme and as the energy source for the reaction. It is essential for DNA replication and repair of damaged DNA. This chain is DNA ligase, found in Nitratidesulfovibrio vulgaris (strain ATCC 29579 / DSM 644 / CCUG 34227 / NCIMB 8303 / VKM B-1760 / Hildenborough) (Desulfovibrio vulgaris).